We begin with the raw amino-acid sequence, 379 residues long: Protein RecA (379 aa).

Gly79–Thr86 is a binding site for ATP.

The protein belongs to the RecA family.

The protein resides in the cytoplasm. Functionally, can catalyze the hydrolysis of ATP in the presence of single-stranded DNA, the ATP-dependent uptake of single-stranded DNA by duplex DNA, and the ATP-dependent hybridization of homologous single-stranded DNAs. It interacts with LexA causing its activation and leading to its autocatalytic cleavage. This Streptococcus agalactiae protein is Protein RecA.